The chain runs to 116 residues: Large ribosomal subunit protein bL20 (116 aa).

The protein belongs to the bacterial ribosomal protein bL20 family.

Binds directly to 23S ribosomal RNA and is necessary for the in vitro assembly process of the 50S ribosomal subunit. It is not involved in the protein synthesizing functions of that subunit. In Nitratiruptor sp. (strain SB155-2), this protein is Large ribosomal subunit protein bL20.